The following is a 147-amino-acid chain: MLMPKKVKHRKVQRGRMKGKATRGNFIAYGDYAIQATECGWLTSNQIEAARIAINRYIKRGGKLWIKVFPDKPVTEKPAETRMGSGKGSPEYWVAVVKPGRVLFELSGVPENVAREAMRLASHKLPMKTKFVTRKDFEQTGGEVNEG.

Belongs to the universal ribosomal protein uL16 family. In terms of assembly, part of the 50S ribosomal subunit.

In terms of biological role, binds 23S rRNA and is also seen to make contacts with the A and possibly P site tRNAs. The chain is Large ribosomal subunit protein uL16 from Clostridium novyi (strain NT).